The primary structure comprises 338 residues: Tetraacyldisaccharide 4'-kinase (338 aa).

51–58 (HLGGAGKT) contributes to the ATP binding site.

This sequence belongs to the LpxK family.

The catalysed reaction is a lipid A disaccharide + ATP = a lipid IVA + ADP + H(+). The protein operates within glycolipid biosynthesis; lipid IV(A) biosynthesis; lipid IV(A) from (3R)-3-hydroxytetradecanoyl-[acyl-carrier-protein] and UDP-N-acetyl-alpha-D-glucosamine: step 6/6. Its function is as follows. Transfers the gamma-phosphate of ATP to the 4'-position of a tetraacyldisaccharide 1-phosphate intermediate (termed DS-1-P) to form tetraacyldisaccharide 1,4'-bis-phosphate (lipid IVA). This chain is Tetraacyldisaccharide 4'-kinase, found in Rhodopseudomonas palustris (strain HaA2).